Here is a 197-residue protein sequence, read N- to C-terminus: Dephospho-CoA kinase (197 aa).

A DPCK domain is found at 2–197 (IIGLTGGIAS…GAIKDLANLV (196 aa)). 10-15 (ASGKST) contributes to the ATP binding site.

This sequence belongs to the CoaE family.

The protein resides in the cytoplasm. It catalyses the reaction 3'-dephospho-CoA + ATP = ADP + CoA + H(+). The protein operates within cofactor biosynthesis; coenzyme A biosynthesis; CoA from (R)-pantothenate: step 5/5. In terms of biological role, catalyzes the phosphorylation of the 3'-hydroxyl group of dephosphocoenzyme A to form coenzyme A. The protein is Dephospho-CoA kinase of Streptococcus thermophilus (strain CNRZ 1066).